A 475-amino-acid polypeptide reads, in one-letter code: ATP synthase subunit beta 1 (475 aa).

152-159 provides a ligand contact to ATP; it reads GGAGVGKT.

Belongs to the ATPase alpha/beta chains family. As to quaternary structure, F-type ATPases have 2 components, CF(1) - the catalytic core - and CF(0) - the membrane proton channel. CF(1) has five subunits: alpha(3), beta(3), gamma(1), delta(1), epsilon(1). CF(0) has four main subunits: a(1), b(1), b'(1) and c(9-12).

It localises to the cell inner membrane. It catalyses the reaction ATP + H2O + 4 H(+)(in) = ADP + phosphate + 5 H(+)(out). Produces ATP from ADP in the presence of a proton gradient across the membrane. The catalytic sites are hosted primarily by the beta subunits. The sequence is that of ATP synthase subunit beta 1 from Cereibacter sphaeroides (strain ATCC 17029 / ATH 2.4.9) (Rhodobacter sphaeroides).